We begin with the raw amino-acid sequence, 176 residues long: HTH-type transcriptional regulator DctR (176 aa).

One can recognise an HTH luxR-type domain in the interval 109 to 174 (VPEANVSLSR…ELVRHQHIDY (66 aa)). Residues 133–152 (TEDILEKLKISLKTFYCHKH) constitute a DNA-binding region (H-T-H motif).

In terms of biological role, may act as a transcriptional regulator of dctA. Could be involved in the regulation of the genes coding for the type III secretion system in enterohaemorragic strains. The sequence is that of HTH-type transcriptional regulator DctR (dctR) from Escherichia coli O157:H7.